The sequence spans 59 residues: Large ribosomal subunit protein uL30 (59 aa).

This sequence belongs to the universal ribosomal protein uL30 family. In terms of assembly, part of the 50S ribosomal subunit.

This is Large ribosomal subunit protein uL30 from Leptospira biflexa serovar Patoc (strain Patoc 1 / ATCC 23582 / Paris).